A 178-amino-acid polypeptide reads, in one-letter code: Chorion class high-cysteine HCB protein 13 (178 aa).

Positions M1–G21 are cleaved as a signal peptide. A left arm region spans residues T22–F46. The interval C47–S110 is central domain. The tract at residues C111 to C178 is right arm (Gly-rich tandem repeats).

Belongs to the chorion protein family.

Its function is as follows. This protein is one of many from the eggshell of the silk moth. This Bombyx mori (Silk moth) protein is Chorion class high-cysteine HCB protein 13.